We begin with the raw amino-acid sequence, 142 residues long: uncharacterized protein (142 aa).

In terms of domain architecture, Peptidase C39 spans 18 to 137 (QSSGYSCGPA…KIFTGNVLVV (120 aa)).

This is an uncharacterized protein from Methanothermobacter marburgensis (strain ATCC BAA-927 / DSM 2133 / JCM 14651 / NBRC 100331 / OCM 82 / Marburg) (Methanobacterium thermoautotrophicum).